The chain runs to 95 residues: Large ribosomal subunit protein bL25 (95 aa).

Belongs to the bacterial ribosomal protein bL25 family. As to quaternary structure, part of the 50S ribosomal subunit; part of the 5S rRNA/L5/L18/L25 subcomplex. Contacts the 5S rRNA. Binds to the 5S rRNA independently of L5 and L18.

Functionally, this is one of the proteins that binds to the 5S RNA in the ribosome where it forms part of the central protuberance. The chain is Large ribosomal subunit protein bL25 from Chromobacterium violaceum (strain ATCC 12472 / DSM 30191 / JCM 1249 / CCUG 213 / NBRC 12614 / NCIMB 9131 / NCTC 9757 / MK).